Consider the following 764-residue polypeptide: Metabotropic glutamate receptor-like protein H (764 aa).

The first 20 residues, 1–20 (MKNILKILILILICINKINC), serve as a signal peptide directing secretion. The Extracellular portion of the chain corresponds to 21 to 393 (LDGDGKQFRM…EVEFSQSIQN (373 aa)). Residues asparagine 72, asparagine 260, asparagine 278, asparagine 344, and asparagine 379 are each glycosylated (N-linked (GlcNAc...) asparagine). The helical transmembrane segment at 394–414 (GFSITTGILIGITILMMIGII) threads the bilayer. The Cytoplasmic portion of the chain corresponds to 415–427 (KYSKTPSMRSASP). The helical transmembrane segment at 428-448 (IFLNFILAGGIIVYIGIIVWV) threads the bilayer. At 449–464 (GPMSTHSCNARLWLVT) the chain is on the extracellular side. A helical transmembrane segment spans residues 465–485 (LGFSTLIGSLVVKNFRIWLIF). Topologically, residues 486–500 (DNPELKSIKITNYQL) are cytoplasmic. The helical transmembrane segment at 501–521 (FPWVGACLVINIILMAILTSV) threads the bilayer. At 522 to 552 (GDLKQIDAMNIDSLGKYEYMKVCKMNSSGAS) the chain is on the extracellular side. Asparagine 547 is a glycosylation site (N-linked (GlcNAc...) asparagine). A helical transmembrane segment spans residues 553 to 573 (TLYTILAYFAALLLVGVFVSW). Over 574 to 587 (KIRIVDILEFNESG) the chain is Cytoplasmic. A helical transmembrane segment spans residues 588–608 (AIANTLYAISFCLFVIVPLMI). At 609–617 (SPQDMQSET) the chain is on the extracellular side. Residues 618 to 638 (IILCTTGLFITTAALLIIFIP) form a helical membrane-spanning segment. The Cytoplasmic segment spans residues 639–764 (KFWRVFRKGA…IIVNDSENNN (126 aa)). The segment at 664 to 764 (ATARAESGSK…IIVNDSENNN (101 aa)) is disordered. Residues 671 to 690 (GSKGSNGNASSGNRTNRRGN) show a composition bias toward low complexity. Residues 707–719 (ENQKEKEKIKDDV) are compositionally biased toward basic and acidic residues. A compositionally biased stretch (acidic residues) spans 731–748 (FTDEASDTDNNEFNDIEL).

It in the N-terminal section; belongs to the BMP lipoprotein family. The protein in the C-terminal section; belongs to the G-protein coupled receptor 3 family. GABA-B receptor subfamily.

The protein localises to the membrane. This is Metabotropic glutamate receptor-like protein H (grlH) from Dictyostelium discoideum (Social amoeba).